Here is a 122-residue protein sequence, read N- to C-terminus: Ribonuclease pancreatic (122 aa).

Positions 6 and 9 each coordinate substrate. Residue H11 is the Proton acceptor of the active site. Disulfide bonds link C25–C83, C39–C94, C57–C109, and C64–C71. Residues 40-44 (KPVNT), K65, and R84 contribute to the substrate site. Residue H117 is the Proton donor of the active site.

Belongs to the pancreatic ribonuclease family. In terms of assembly, monomer. Interacts with and forms tight 1:1 complexes with RNH1. Dimerization of two such complexes may occur. Interaction with RNH1 inhibits this protein. In terms of tissue distribution, pancreas.

It is found in the secreted. The enzyme catalyses an [RNA] containing cytidine + H2O = an [RNA]-3'-cytidine-3'-phosphate + a 5'-hydroxy-ribonucleotide-3'-[RNA].. The catalysed reaction is an [RNA] containing uridine + H2O = an [RNA]-3'-uridine-3'-phosphate + a 5'-hydroxy-ribonucleotide-3'-[RNA].. Functionally, endonuclease that catalyzes the cleavage of RNA on the 3' side of pyrimidine nucleotides. Acts on single-stranded and double-stranded RNA. The polypeptide is Ribonuclease pancreatic (Notamacropus rufogriseus (Red-necked wallaby)).